A 218-amino-acid chain; its full sequence is Peptidyl-tRNA hydrolase (218 aa).

Position 19 (tyrosine 19) interacts with tRNA. The active-site Proton acceptor is the histidine 24. The tRNA site is built by tyrosine 68, asparagine 70, and asparagine 116. The segment at 181–218 (WNTATQRLNARPAPPKPPKAPKAPQPAAADQPKDESQP) is disordered. The segment covering 192-204 (PAPPKPPKAPKAP) has biased composition (pro residues).

It belongs to the PTH family. Monomer.

Its subcellular location is the cytoplasm. It carries out the reaction an N-acyl-L-alpha-aminoacyl-tRNA + H2O = an N-acyl-L-amino acid + a tRNA + H(+). Its function is as follows. Hydrolyzes ribosome-free peptidyl-tRNAs (with 1 or more amino acids incorporated), which drop off the ribosome during protein synthesis, or as a result of ribosome stalling. Functionally, catalyzes the release of premature peptidyl moieties from peptidyl-tRNA molecules trapped in stalled 50S ribosomal subunits, and thus maintains levels of free tRNAs and 50S ribosomes. The protein is Peptidyl-tRNA hydrolase of Azoarcus sp. (strain BH72).